The sequence spans 605 residues: Protein ZRG17 (605 aa).

At 1–225 (METPQMNAIQ…DLLSNLPWPK (225 aa)) the chain is on the cytoplasmic side. Phosphoserine is present on residues S16 and S131. A disordered region spans residues 118–178 (PAPKLVPPPP…PSSAASRTSF (61 aa)). Polar residues predominate over residues 143–176 (SKRSSMTLDSPFNFTTSTLQPHQQTPPSSAASRT). A helical membrane pass occupies residues 226 to 246 (AYIQLSIAALQIFACLITFQV). The Lumenal portion of the chain corresponds to 247–254 (GHLYSWSN). A helical membrane pass occupies residues 255-275 (FITLSHFITYDIIGSLVIIFV). Residues 276 to 287 (ENLSQFQVWFTG) lie on the Cytoplasmic side of the membrane. Residues 288–308 (TITFPFGLNRIDVLLSFALAV) form a helical membrane-spanning segment. S309 is a topological domain (lumenal). Residues 310-330 (LCFVGLDLLFHIIEEFIVLFV) traverse the membrane as a helical segment. The Cytoplasmic portion of the chain corresponds to 331 to 363 (ESGSSLTNNHDHDEINEQIPHSHIANANDSQNE). A helical transmembrane segment spans residues 364–384 (NITLWYSILMINLVLSTLSLY). Residues 385–399 (KTFYANKYSNLKTKN) lie on the Lumenal side of the membrane. A helical transmembrane segment spans residues 400–420 (PIITITYTAYLFIYPLLLDLL). Topologically, residues 421–422 (SS) are cytoplasmic. Residues 423-443 (ISDYLATLVISSLILWHGLTI) traverse the membrane as a helical segment. Topologically, residues 444–545 (ARWTSTVLLM…ERLSEFKSRY (102 aa)) are lumenal. Polar residues predominate over residues 473 to 482 (DTTAHTQQVE). Residues 473 to 497 (DTTAHTQQVESKAAKEKPSVRPRSM) form a disordered region. A Phosphoserine modification is found at S498. Residues 546–566 (ILNYDDIVISKVNFTLYVVLI) form a helical membrane-spanning segment. At 567–605 (KITMKGGSDDDELMLRLAIDKCIQTSIPTCETTIDIDRI) the chain is on the cytoplasmic side.

It is found in the endoplasmic reticulum membrane. This chain is Protein ZRG17 (ZRG17), found in Saccharomyces cerevisiae (strain ATCC 204508 / S288c) (Baker's yeast).